We begin with the raw amino-acid sequence, 630 residues long: A-type voltage-gated potassium channel KCND2 (630 aa).

Over 1-184 (MAAGVAAWLP…FENPHTSTMA (184 aa)) the chain is Cytoplasmic. The interaction with KCNIP1, KCNIP2, and other family members stretch occupies residues 2-20 (AAGVAAWLPFARAAAIGWM). Position 38 is a phosphothreonine (threonine 38). An interaction with KCNIP1 region spans residues 71-90 (ERDFFYHPETQQYFFDRDPD). Zn(2+) is bound by residues histidine 105, cysteine 111, cysteine 132, and cysteine 133. The helical transmembrane segment at 185–206 (LVFYYVTGFFIAVSVIANVVET) threads the bilayer. The Extracellular segment spans residues 207 to 226 (VPCGSSPGHIKELPCGERYA). The chain crosses the membrane as a helical span at residues 227-249 (VAFFCLDTACVMIFTVEYLLRLA). Topologically, residues 250-256 (AAPSRYR) are cytoplasmic. Residues 257-281 (FVRSVMSIIDVVAILPYYIGLVMTD) traverse the membrane as a helical segment. Topologically, residues 282–287 (NEDVSG) are extracellular. A helical; Voltage-sensor membrane pass occupies residues 288–307 (AFVTLRVFRVFRIFKFSRHS). Topologically, residues 308 to 321 (QGLRILGYTLKSCA) are cytoplasmic. Positions 308-321 (QGLRILGYTLKSCA) are S4-S5 linker. A helical transmembrane segment spans residues 322–345 (SELGFLLFSLTMAIIIFATVMFYA). Residues 346–357 (EKGSSASKFTSI) are Extracellular-facing. Positions 358 to 369 (PAAFWYTIVTMT) form an intramembrane region, helical. 4 residues coordinate K(+): threonine 370, leucine 371, glycine 372, and tyrosine 373. The short motif at 370–375 (TLGYGD) is the Selectivity filter element. Residues 370 to 377 (TLGYGDMV) lie within the membrane without spanning it. The Extracellular portion of the chain corresponds to 378–380 (PKT). Residues 381–403 (IAGKIFGSICSLSGVLVIALPVP) traverse the membrane as a helical segment. Over 404–630 (VIVSNFSRIY…GGNIVRVSAL (227 aa)) the chain is Cytoplasmic. Serine 438 carries the post-translational modification Phosphoserine. A required for dendritic targeting region spans residues 474-489 (FETQHHHLLHCLEKTT). The segment at 474–630 (FETQHHHLLH…GGNIVRVSAL (157 aa)) is important for normal channel activation and inactivation, for interaction with KCNIP2, and probably other family members as well. A phosphoserine mark is found at serine 548, serine 552, serine 572, and serine 575. The disordered stretch occupies residues 600-623 (IPTPPVTTPEGDDRPESPEYSGGN). Phosphothreonine occurs at positions 602 and 607. Residue serine 616 is modified to Phosphoserine. The PDZ-binding signature appears at 627 to 630 (VSAL).

The protein belongs to the potassium channel family. D (Shal) (TC 1.A.1.2) subfamily. Kv4.2/KCND2 sub-subfamily. In terms of assembly, homotetramer or heterotetramer with KCND1 or KCND3. Associates with the regulatory subunits KCNIP2, KCNIP3 and KCNIP4. Interacts with the regulatory subunit KCNIP1; this interaction mediates the capture of both the N- and C-terminus of KCND2, preventing N-type inactivation and stabilizing the S6 conformation, thereby accelerating closed state inactivation and recovery. Interacts with DPP10, DLG4 and DLG1. In vivo, probably exists as heteromeric complex containing variable proportions of KCND1, KCND2, KCND3, KCNIP1, KCNIP2, KCNIP3, KCNIP4, DPP6 and DPP10. The tetrameric channel can associate with up to four regulatory subunits, such as KCNIP2 or KCNIP4. Interaction with KCNIP3 promotes tetramerization and formation of a functional potassium channel. Interaction with four KCNIP4 chains does not reduce interaction with DPP10. Probably part of a complex consisting of KCNIP1, KCNIP2 isoform 3 and KCND2. Interacts with FLNA and FLNC. Interacts with NCS1/FREQ. Identified in a complex with cAMP-dependent protein kinase (PKA), CAV3, AKAP6 and KCND3 in cardiac myocytes. Interacts (via S1 and S2 helices) with DPP6; this interaction stabilizes the conformation of the S1-S2 helices and facilitates S4 conformational change, including S4 sliding up and down, thereby accelerating activation, inactivation, and recovery. In terms of processing, phosphorylation at Ser-438 in response to MAPK activation is increased in stimulated dendrites. Interaction with KCNIP2 and DPP6 propomtes phosphorylation by PKA at Ser-552. Phosphorylation at Ser-552 has no effect on interaction with KCNIP3, but is required for the regulation of channel activity by KCNIP3. Phosphorylation at Ser-552 leads to KCND2 internalization. Phosphorylated by MAPK in response to signaling via the metabotropic glutamate receptor GRM5. Phosphorylation at Ser-616 is required for the down-regulation of neuronal A-type currents in response to signaling via GRM5. In terms of tissue distribution, detected in brain cortex, hippocampus, dentate gyrus, thalamus and cerebellum. Detected in neurons from the primary visual cortex. Detected in the supraoptic nucleus in hypothalamus, in hippocampus and the habenular nucleus of the thalamus. Detected in the bed nucleus of the stria terminalis. Detected in dendritic fields in the hippocampus CA1 layer, in stratum radiatum, stratum oriens, stratum lacunosum-moleculare and stratum pyramidale. Detected in dendritic fields in the hippocampus CA3 layer and in dentate gyrus. Detected in the cerebellum granule cell layer, where it localizes at synapses. Detected in the main olfactory bulb, especially in the granule cell layer and the external plexiform layer, but also the mitral layer. Detected in heart atrium and ventricle. Detected in heart left ventricle (at protein level). Highly expressed in heart and throughout the brain, with similar levels in cortex and hypothalamus, and much higher levels in hippocampus, dentate gyrus and the habenular nucleus of the thalamus. Detected in brain, and at lower levels in heart atrium and ventricle. Detected in neurons from the bed nucleus of the stria terminalis. Detected in aorta, cardiac and smooth muscle.

It localises to the cell membrane. The protein resides in the cell projection. The protein localises to the dendrite. Its subcellular location is the synapse. It is found in the perikaryon. It localises to the postsynaptic cell membrane. The protein resides in the dendritic spine. The protein localises to the sarcolemma. Its subcellular location is the cell junction. It is found in the membrane. It localises to the caveola. It catalyses the reaction K(+)(in) = K(+)(out). Its activity is regulated as follows. Inhibited by 5 mM 4-aminopyridine (4-AP). Not inhibited by dendrotoxins and by tetraethylammonium (TEA). Inhibited by 10 mM flecainide and 20 mM quinidine. Inhibited by the heteropodatoxins HpTx(1), HpTx(2), and HpTx(3). Its function is as follows. Voltage-gated potassium channel that mediates transmembrane potassium transport in excitable membranes, primarily in the brain, but also in rodent heart. Mediates the major part of the dendritic A-type current I(SA) in brain neurons. This current is activated at membrane potentials that are below the threshold for action potentials. It regulates neuronal excitability, prolongs the latency before the first spike in a series of action potentials, regulates the frequency of repetitive action potential firing, shortens the duration of action potentials and regulates the back-propagation of action potentials from the neuronal cell body to the dendrites. Contributes to the regulation of the circadian rhythm of action potential firing in suprachiasmatic nucleus neurons, which regulates the circadian rhythm of locomotor activity. Functions downstream of the metabotropic glutamate receptor GRM5 and plays a role in neuronal excitability and in nociception mediated by activation of GRM5. Mediates the transient outward current I(to) in rodent heart left ventricle apex cells, but not in human heart, where this current is mediated by another family member. Forms tetrameric potassium-selective channels through which potassium ions pass in accordance with their electrochemical gradient. The channel alternates between opened and closed conformations in response to the voltage difference across the membrane. Can form functional homotetrameric channels and heterotetrameric channels that contain variable proportions of KCND2 and KCND3; channel properties depend on the type of pore-forming alpha subunits that are part of the channel. In vivo, membranes probably contain a mixture of heteromeric potassium channel complexes. Interaction with specific isoforms of the regulatory subunits KCNIP1, KCNIP2, KCNIP3 or KCNIP4 strongly increases expression at the cell surface and thereby increases channel activity; it modulates the kinetics of channel activation and inactivation, shifts the threshold for channel activation to more negative voltage values, shifts the threshold for inactivation to less negative voltages and accelerates recovery after inactivation. Likewise, interaction with DPP6 or DPP10 promotes expression at the cell membrane and regulates both channel characteristics and activity. Upon depolarization, the channel goes from a resting closed state (C state) to an activated but non-conducting state (C* state), from there, the channel may either inactivate (I state) or open (O state). In Rattus norvegicus (Rat), this protein is A-type voltage-gated potassium channel KCND2.